The following is a 516-amino-acid chain: uncharacterized protein (516 aa).

The region spanning 31–185 (ACIFLSKFDM…LDKFDIFEKF (155 aa)) is the uDENN domain. The cDENN domain maps to 211–365 (HLVEYLPYWT…LEVYEKLILG (155 aa)). The dDENN domain maps to 367-513 (LQEDASTNAT…DISNLPECLG (147 aa)). 2 S-palmitoyl cysteine lipidation sites follow: cysteine 511 and cysteine 516.

Post-translationally, palmitoylated by AKR1.

It localises to the lipid droplet. In terms of biological role, may be involved in lipid metabolism. This is an uncharacterized protein from Saccharomyces cerevisiae (strain ATCC 204508 / S288c) (Baker's yeast).